We begin with the raw amino-acid sequence, 205 residues long: Large ribosomal subunit protein uL4 (205 aa).

Residues 45-97 are disordered; the sequence is RQGTSAVKNRSAVRGGGKKPWRQKGTGRARQGSIRAPQWRGGGTVFGPTPRSY. A compositionally biased stretch (basic residues) spans 60–71; it reads GGKKPWRQKGTG.

It belongs to the universal ribosomal protein uL4 family. Part of the 50S ribosomal subunit.

In terms of biological role, one of the primary rRNA binding proteins, this protein initially binds near the 5'-end of the 23S rRNA. It is important during the early stages of 50S assembly. It makes multiple contacts with different domains of the 23S rRNA in the assembled 50S subunit and ribosome. Functionally, forms part of the polypeptide exit tunnel. The protein is Large ribosomal subunit protein uL4 of Lactobacillus gasseri (strain ATCC 33323 / DSM 20243 / BCRC 14619 / CIP 102991 / JCM 1131 / KCTC 3163 / NCIMB 11718 / NCTC 13722 / AM63).